Consider the following 235-residue polypeptide: Elongation factor Tu, chloroplastic (235 aa).

The tr-type G domain occupies 1 to 125 (KNMITGAAQM…KVDSYIPTPQ (125 aa)). Residue 47-50 (NKED) coordinates GTP.

The protein belongs to the TRAFAC class translation factor GTPase superfamily. Classic translation factor GTPase family. EF-Tu/EF-1A subfamily.

The protein localises to the plastid. It is found in the chloroplast. The catalysed reaction is GTP + H2O = GDP + phosphate + H(+). Functionally, GTP hydrolase that promotes the GTP-dependent binding of aminoacyl-tRNA to the A-site of ribosomes during protein biosynthesis. In Gonium pectorale (Green alga), this protein is Elongation factor Tu, chloroplastic (tufA).